Here is a 201-residue protein sequence, read N- to C-terminus: Kunitz type trypsin inhibitor 104 (201 aa).

An N-terminal signal peptide occupies residues 1–24 (MSTRSLTIFILAHVWLLMATTSIA). 3 disulfides stabilise this stretch: cysteine 63/cysteine 110, cysteine 161/cysteine 173, and cysteine 166/cysteine 169.

It belongs to the protease inhibitor I3 (leguminous Kunitz-type inhibitor) family. As to quaternary structure, interacts with CP.

The protein localises to the secreted. The protein resides in the extracellular space. It is found in the apoplast. Its function is as follows. Protease inhibitor involved in the control of mycorrhiza establishment and arbuscule development during root colonization by arbuscular mycorrhizal (AM) fungi (e.g. Rhizophagus irregularis). In Medicago truncatula (Barrel medic), this protein is Kunitz type trypsin inhibitor 104.